Consider the following 80-residue polypeptide: MGVKGQLLQDPFLNVLRKEHIPVSIYLVNGIKLQGHIDSFDQYVVLLRNSVTQMVYKHAISTIVPGKAVSIPVPAETLPE.

Positions 10 to 69 (DPFLNVLRKEHIPVSIYLVNGIKLQGHIDSFDQYVVLLRNSVTQMVYKHAISTIVPGKAV) constitute a Sm domain.

It belongs to the Hfq family. In terms of assembly, homohexamer.

In terms of biological role, RNA chaperone that binds small regulatory RNA (sRNAs) and mRNAs to facilitate mRNA translational regulation in response to envelope stress, environmental stress and changes in metabolite concentrations. Also binds with high specificity to tRNAs. In Nitrosomonas eutropha (strain DSM 101675 / C91 / Nm57), this protein is RNA-binding protein Hfq.